Here is a 282-residue protein sequence, read N- to C-terminus: Bis(5'-nucleosyl)-tetraphosphatase, symmetrical (282 aa).

Belongs to the Ap4A hydrolase family.

It catalyses the reaction P(1),P(4)-bis(5'-adenosyl) tetraphosphate + H2O = 2 ADP + 2 H(+). In terms of biological role, hydrolyzes diadenosine 5',5'''-P1,P4-tetraphosphate to yield ADP. This is Bis(5'-nucleosyl)-tetraphosphatase, symmetrical from Shigella dysenteriae serotype 1 (strain Sd197).